Reading from the N-terminus, the 301-residue chain is Glycine--tRNA ligase alpha subunit (301 aa).

Belongs to the class-II aminoacyl-tRNA synthetase family. In terms of assembly, tetramer of two alpha and two beta subunits.

The protein resides in the cytoplasm. The catalysed reaction is tRNA(Gly) + glycine + ATP = glycyl-tRNA(Gly) + AMP + diphosphate. The protein is Glycine--tRNA ligase alpha subunit of Shewanella baltica (strain OS223).